Consider the following 274-residue polypeptide: Triosephosphate isomerase (274 aa).

13–15 lines the substrate pocket; the sequence is NWK. His98 functions as the Electrophile in the catalytic mechanism. Residue Glu170 is the Proton acceptor of the active site. Residues Gly176 and Ser216 each contribute to the substrate site.

The protein belongs to the triosephosphate isomerase family. In terms of assembly, homodimer.

The protein resides in the cytoplasm. The catalysed reaction is D-glyceraldehyde 3-phosphate = dihydroxyacetone phosphate. The protein operates within carbohydrate biosynthesis; gluconeogenesis. It participates in carbohydrate degradation; glycolysis; D-glyceraldehyde 3-phosphate from glycerone phosphate: step 1/1. Involved in the gluconeogenesis. Catalyzes stereospecifically the conversion of dihydroxyacetone phosphate (DHAP) to D-glyceraldehyde-3-phosphate (G3P). The polypeptide is Triosephosphate isomerase (Onion yellows phytoplasma (strain OY-M)).